Here is a 434-residue protein sequence, read N- to C-terminus: Sulfide-quinone reductase (434 aa).

Residues 8–12, 34–35, and 77–78 contribute to the FAD site; these read GAGTG and SA. The active-site Cysteine persulfide intermediate is the cysteine 160. Residues isoleucine 302 and glycine 322 each coordinate FAD. The Cysteine persulfide intermediate role is filled by cysteine 356. Residue lysine 391 participates in FAD binding.

The protein belongs to the SQRD family. As to quaternary structure, homodimer. FAD serves as cofactor.

It localises to the membrane. It carries out the reaction n a quinone + n hydrogen sulfide + n H(+) = polysulfur(n-2) + n a quinol. Functionally, catalyzes the oxidation of hydrogen sulfide, with the help of a quinone. Consecutive reaction cycles lead to the accumulation of a polysulfide product on the active site Cys residues; these products are released when they exceed a critical length, typically as cyclooctasulfur. This Acidithiobacillus ferrooxidans (strain ATCC 23270 / DSM 14882 / CIP 104768 / NCIMB 8455) (Ferrobacillus ferrooxidans (strain ATCC 23270)) protein is Sulfide-quinone reductase.